The sequence spans 481 residues: Proline--tRNA ligase (481 aa).

Belongs to the class-II aminoacyl-tRNA synthetase family. ProS type 3 subfamily. In terms of assembly, homodimer.

It localises to the cytoplasm. It carries out the reaction tRNA(Pro) + L-proline + ATP = L-prolyl-tRNA(Pro) + AMP + diphosphate. Functionally, catalyzes the attachment of proline to tRNA(Pro) in a two-step reaction: proline is first activated by ATP to form Pro-AMP and then transferred to the acceptor end of tRNA(Pro). The protein is Proline--tRNA ligase of Chlorobium phaeobacteroides (strain BS1).